We begin with the raw amino-acid sequence, 132 residues long: D-ribose pyranase (132 aa).

His-20 functions as the Proton donor in the catalytic mechanism. Residues Asp-28, His-99, and 121–123 (YSN) contribute to the substrate site.

This sequence belongs to the RbsD / FucU family. RbsD subfamily. As to quaternary structure, homodecamer.

It localises to the cytoplasm. The catalysed reaction is beta-D-ribopyranose = beta-D-ribofuranose. Its pathway is carbohydrate metabolism; D-ribose degradation; D-ribose 5-phosphate from beta-D-ribopyranose: step 1/2. Catalyzes the interconversion of beta-pyran and beta-furan forms of D-ribose. This Streptococcus agalactiae serotype V (strain ATCC BAA-611 / 2603 V/R) protein is D-ribose pyranase.